A 249-amino-acid polypeptide reads, in one-letter code: Proteasome subunit alpha type-7 (249 aa).

The protein belongs to the peptidase T1A family. As to quaternary structure, the 26S proteasome consists of a 20S proteasome core and two 19S regulatory subunits. The 20S proteasome core is a barrel-shaped complex made of 28 subunits that are arranged in four stacked rings. The two outer rings are each formed by seven alpha subunits, and the two inner rings are formed by seven beta subunits. The proteolytic activity is exerted by three beta-subunits PSMB5, PSMB6 and PSMB7. PSMA7 interacts directly with the PSMG1-PSMG2 heterodimer which promotes 20S proteasome assembly. Interacts with HIF1A. Interacts with RAB7A. Interacts with PRKN. Interacts with ABL1 and ABL2. Interacts with EMAP2. Interacts with MAVS.

Its subcellular location is the cytoplasm. The protein resides in the nucleus. Its function is as follows. Component of the 20S core proteasome complex involved in the proteolytic degradation of most intracellular proteins. This complex plays numerous essential roles within the cell by associating with different regulatory particles. Associated with two 19S regulatory particles, forms the 26S proteasome and thus participates in the ATP-dependent degradation of ubiquitinated proteins. The 26S proteasome plays a key role in the maintenance of protein homeostasis by removing misfolded or damaged proteins that could impair cellular functions, and by removing proteins whose functions are no longer required. Associated with the PA200 or PA28, the 20S proteasome mediates ubiquitin-independent protein degradation. This type of proteolysis is required in several pathways including spermatogenesis (20S-PA200 complex) or generation of a subset of MHC class I-presented antigenic peptides (20S-PA28 complex). Inhibits the transactivation function of HIF-1A under both normoxic and hypoxia-mimicking conditions. The interaction with EMAP2 increases the proteasome-mediated HIF-1A degradation under the hypoxic conditions. Plays a role in hepatitis C virus internal ribosome entry site-mediated translation. Mediates nuclear translocation of the androgen receptor (AR) and thereby enhances androgen-mediated transactivation. Promotes MAVS degradation and thereby negatively regulates MAVS-mediated innate immune response. The chain is Proteasome subunit alpha type-7 (PSMA7) from Gallus gallus (Chicken).